The following is a 424-amino-acid chain: Protein UL117 (424 aa).

The interval 57 to 82 is disordered; the sequence is IVPTTSSSLAPPRDDERRPTPPLRPP.

The protein belongs to the herpesviridae U84 family.

It localises to the host nucleus. Plays a role in the inhibition of host DNA replication in the infected cell. Targets the mini-chromosome maintenance (MCM) complex and blocks the accumulation of MCM proteins and their loading onto host chromatin. In Human cytomegalovirus (strain AD169) (HHV-5), this protein is Protein UL117 (UL117).